Here is a 167-residue protein sequence, read N- to C-terminus: V-type proton ATPase subunit c' (167 aa).

At 1–13 (MAEIMADSELAPK) the chain is on the lumenal side. The helical transmembrane segment at 14-34 (FAPFIGMAGIAAAMIFGSAGA) threads the bilayer. Residues 35–59 (AYGTAKSGIGIAGVGTFRPDLIMKC) are Cytoplasmic-facing. The chain crosses the membrane as a helical span at residues 60 to 80 (LIPVVMSGIIAVYALVVAVLI). The Lumenal portion of the chain corresponds to 81 to 101 (AQDLGPPGSGQHYSLFNGFMH). The helical transmembrane segment at 102 to 122 (LACGLSVGLTGLAAGYCIGIV) threads the bilayer. Residues 123–140 (GDKGVRSFMLQSRIFVGM) are Cytoplasmic-facing. The chain crosses the membrane as a helical span at residues 141–161 (VLILIFGEVLGLYGLIVALIL). Residues 162 to 167 (NTKSKG) lie on the Lumenal side of the membrane.

It belongs to the V-ATPase proteolipid subunit family. V-ATPase is a heteromultimeric enzyme composed of a peripheral catalytic V1 complex (components A to H) attached to an integral membrane V0 proton pore complex (components: a, c, c', c'', d, e, f and VOA1). The decameric c-ring forms the proton-conducting pore, and is composed of eight proteolipid subunits c, one subunit c' and one subunit c''.

It is found in the vacuole membrane. In terms of biological role, proton-conducting pore forming subunit of the V0 complex of vacuolar(H+)-ATPase (V-ATPase), a multisubunit enzyme composed of a peripheral complex (V1) that hydrolyzes ATP and a membrane integral complex (V0) that translocates protons. V-ATPase is responsible for acidifying and maintaining the pH of intracellular compartments. This chain is V-type proton ATPase subunit c' (vma-11), found in Neurospora crassa (strain ATCC 24698 / 74-OR23-1A / CBS 708.71 / DSM 1257 / FGSC 987).